Here is a 299-residue protein sequence, read N- to C-terminus: Protease HtpX homolog (299 aa).

2 helical membrane passes run 16–36 and 38–58; these read VMAA…YVFF and SAIA…VLMI. Residue His-144 coordinates Zn(2+). Glu-145 is an active-site residue. His-148 is a binding site for Zn(2+). Transmembrane regions (helical) follow at residues 159–179 and 198–218; these read IALA…NAFW and VLLM…ASLV. Glu-227 is a binding site for Zn(2+).

It belongs to the peptidase M48B family. Requires Zn(2+) as cofactor.

It is found in the cell membrane. This chain is Protease HtpX homolog, found in Lactiplantibacillus plantarum (strain ATCC BAA-793 / NCIMB 8826 / WCFS1) (Lactobacillus plantarum).